The sequence spans 186 residues: GTP cyclohydrolase 1 2 (186 aa).

It belongs to the GTP cyclohydrolase I family. Homomer.

The catalysed reaction is GTP + H2O = 7,8-dihydroneopterin 3'-triphosphate + formate + H(+). Its pathway is cofactor biosynthesis; 7,8-dihydroneopterin triphosphate biosynthesis; 7,8-dihydroneopterin triphosphate from GTP: step 1/1. The sequence is that of GTP cyclohydrolase 1 2 from Pseudomonas putida (strain ATCC 47054 / DSM 6125 / CFBP 8728 / NCIMB 11950 / KT2440).